Reading from the N-terminus, the 532-residue chain is Apoptosis-inducing factor 1, mitochondrial (532 aa).

The transit peptide at 1 to 26 directs the protein to the mitochondrion; the sequence is MIRNLTKLTKFTIGNRFYQSSSKGRF. Residues 63 to 84 are disordered; that stretch reads STPSIDVKEKKSQPPKTKEDYQ. The FAD-dependent oxidoreductase stretch occupies residues 98-440; it reads YVIIGGGTAA…APYTYQPFFW (343 aa). Residues 102-106, 128-129, Arg-136, and Lys-141 each bind FAD; these read GGGTA and KE. NAD(+) is bound at residue Trp-160. The FAD site is built by Val-188 and Arg-236. Residues 260–263, Glu-288, and Gly-353 each bind NAD(+); that span reads GGFL. Asp-392 is a binding site for FAD. Positions 400-406 match the Nuclear localization signal motif; the sequence is SLGVRRR. Residues 408–409, Trp-440, and Glu-450 contribute to the NAD(+) site; that span reads EH. FAD-binding positions include 409–410 and Trp-440; that span reads HH.

The protein belongs to the FAD-dependent oxidoreductase family. The cofactor is FAD.

It is found in the mitochondrion. The protein localises to the cytoplasm. The protein resides in the nucleus. The catalysed reaction is A + NADH + H(+) = AH2 + NAD(+). Functionally, probable NADH oxidoreductase that acts as a caspase-independent mitochondrial effector of apoptotic cell death. The polypeptide is Apoptosis-inducing factor 1, mitochondrial (aif) (Dictyostelium discoideum (Social amoeba)).